Here is a 350-residue protein sequence, read N- to C-terminus: Glycerol-1-phosphate dehydrogenase [NAD(P)+] (350 aa).

Residues glycine 97–aspartate 101 and threonine 119–serine 122 contribute to the NAD(+) site. Position 124 (aspartate 124) interacts with substrate. Position 128 (serine 128) interacts with NAD(+). Substrate is bound at residue aspartate 171. The Zn(2+) site is built by aspartate 171 and histidine 251. Substrate is bound at residue histidine 255. Histidine 267 is a Zn(2+) binding site.

This sequence belongs to the glycerol-1-phosphate dehydrogenase family. It depends on Zn(2+) as a cofactor.

Its subcellular location is the cytoplasm. It catalyses the reaction sn-glycerol 1-phosphate + NAD(+) = dihydroxyacetone phosphate + NADH + H(+). It carries out the reaction sn-glycerol 1-phosphate + NADP(+) = dihydroxyacetone phosphate + NADPH + H(+). The protein operates within membrane lipid metabolism; glycerophospholipid metabolism. Its function is as follows. Catalyzes the NAD(P)H-dependent reduction of dihydroxyacetonephosphate (DHAP or glycerone phosphate) to glycerol 1-phosphate (G1P). The G1P thus generated is used as the glycerophosphate backbone of phospholipids in the cellular membranes of Archaea. In Thermococcus sibiricus (strain DSM 12597 / MM 739), this protein is Glycerol-1-phosphate dehydrogenase [NAD(P)+].